We begin with the raw amino-acid sequence, 41 residues long: Large ribosomal subunit protein bL36 (41 aa).

This sequence belongs to the bacterial ribosomal protein bL36 family.

This is Large ribosomal subunit protein bL36 from Caulobacter vibrioides (strain ATCC 19089 / CIP 103742 / CB 15) (Caulobacter crescentus).